The sequence spans 417 residues: Serine hydroxymethyltransferase (417 aa).

(6S)-5,6,7,8-tetrahydrofolate is bound by residues leucine 121 and 125–127 (GHL). Position 229 is an N6-(pyridoxal phosphate)lysine (lysine 229). 355–357 (SPF) is a binding site for (6S)-5,6,7,8-tetrahydrofolate.

Belongs to the SHMT family. As to quaternary structure, homodimer. The cofactor is pyridoxal 5'-phosphate.

The protein localises to the cytoplasm. It carries out the reaction (6R)-5,10-methylene-5,6,7,8-tetrahydrofolate + glycine + H2O = (6S)-5,6,7,8-tetrahydrofolate + L-serine. Its pathway is one-carbon metabolism; tetrahydrofolate interconversion. It functions in the pathway amino-acid biosynthesis; glycine biosynthesis; glycine from L-serine: step 1/1. In terms of biological role, catalyzes the reversible interconversion of serine and glycine with tetrahydrofolate (THF) serving as the one-carbon carrier. This reaction serves as the major source of one-carbon groups required for the biosynthesis of purines, thymidylate, methionine, and other important biomolecules. Also exhibits THF-independent aldolase activity toward beta-hydroxyamino acids, producing glycine and aldehydes, via a retro-aldol mechanism. This chain is Serine hydroxymethyltransferase, found in Aeromonas hydrophila subsp. hydrophila (strain ATCC 7966 / DSM 30187 / BCRC 13018 / CCUG 14551 / JCM 1027 / KCTC 2358 / NCIMB 9240 / NCTC 8049).